Consider the following 375-residue polypeptide: Peritrophin-48 (375 aa).

Residues 1–20 (MIIKTLLASVAIMLIATVNA) form the signal peptide. 5 consecutive Chitin-binding type-2 domains span residues 25–83 (AKYC…NCIL), 86–143 (DNPC…SDDD), 153–210 (LNIC…MCER), 224–292 (ETLC…GCNR), and 294–360 (EYTT…ACQN). Cys-60 and Cys-73 form a disulfide bridge. Asn-117 carries N-linked (GlcNAc...) asparagine glycosylation. 4 disulfide bridges follow: Cys-120–Cys-133, Cys-187–Cys-200, Cys-265–Cys-278, and Cys-330–Cys-343. An N-linked (GlcNAc...) asparagine glycan is attached at Asn-360.

Post-translationally, glycosylated. As to expression, cardia and midgut peritrophic membrane.

In terms of biological role, may bind chitin or related oligosaccharide structures. The sequence is that of Peritrophin-48 from Lucilia cuprina (Green bottle fly).